A 338-amino-acid chain; its full sequence is Tetraacyldisaccharide 4'-kinase (338 aa).

49–56 (TVGGTGKT) lines the ATP pocket.

The protein belongs to the LpxK family.

The enzyme catalyses a lipid A disaccharide + ATP = a lipid IVA + ADP + H(+). The protein operates within glycolipid biosynthesis; lipid IV(A) biosynthesis; lipid IV(A) from (3R)-3-hydroxytetradecanoyl-[acyl-carrier-protein] and UDP-N-acetyl-alpha-D-glucosamine: step 6/6. Its function is as follows. Transfers the gamma-phosphate of ATP to the 4'-position of a tetraacyldisaccharide 1-phosphate intermediate (termed DS-1-P) to form tetraacyldisaccharide 1,4'-bis-phosphate (lipid IVA). The protein is Tetraacyldisaccharide 4'-kinase of Geobacter metallireducens (strain ATCC 53774 / DSM 7210 / GS-15).